Reading from the N-terminus, the 482-residue chain is 7-deoxyloganetic acid glucosyl transferase (482 aa).

H22 (proton acceptor) is an active-site residue. H22 serves as a coordination point for an anthocyanidin. D127 (charge relay) is an active-site residue. Positions 149, 362, 364, 379, 382, 383, 384, and 387 each coordinate UDP-alpha-D-glucose. A402 contributes to the an anthocyanidin binding site. The UDP-alpha-D-glucose site is built by D403 and Q404.

Belongs to the UDP-glycosyltransferase family. As to expression, expressed in the leaf internal phloem-associated parenchyma (IPAP) inside the mesophyll. Mostly observed in leaves, roots and stems, and, to a lower extent, in flowers.

It is found in the nucleus. Its subcellular location is the cytoplasm. The protein localises to the cytosol. The enzyme catalyses 7-deoxyloganetate + UDP-alpha-D-glucose = 7-deoxyloganate + UDP + H(+). Its pathway is alkaloid biosynthesis. Functionally, component of the seco-iridoid and derivatives monoterpenoid indole alkaloids (MIAs, e.g. vincristine, quinine, and strychnine) biosynthesis pathway. Catalyzes the glucosylation of 7-deoxyloganetic acid to form 7-deoxyloganic acid using UDP-glucose as the sugar donor. Inactive with loganetic acid, loganetin, iridodial, iridotrial, 8-OH-geraniol, jasmonic acid, gibberellic acid, indole acetic acid, salicylic acid, abscisic acid, zeatin and luteolin. This chain is 7-deoxyloganetic acid glucosyl transferase, found in Catharanthus roseus (Madagascar periwinkle).